The sequence spans 238 residues: MSKGEELFTGVVPILVELDGDVNGHKFSVSGEGEGDATYGKLTLKFICTTGKLPVPWPTLVTTFSYGVQCFSRYPDHMKQHDFFKSAMPEGYVQERTIFFKDDGNYKTRAEVKFEGDTLVNRIELKGIDFKEDGNILGHKLEYNYNSHNVYIMADKQKNGIKVNFKIRHNIEDGSVQLADHYQQNTPIGDGPVLLPDNHYLSTQSALSKDPNEKRDHMVLLEFVTAAGITHGMDELYK.

A cross-link (5-imidazolinone (Ser-Gly)) is located at residues 65–67; that stretch reads SYG. Tyrosine 66 carries the (Z)-2,3-didehydrotyrosine modification.

It belongs to the GFP family. Monomer. In terms of processing, contains a chromophore consisting of modified amino acid residues. The chromophore is formed by autocatalytic backbone condensation between Ser-65 and Gly-67, and oxidation of Tyr-66 to didehydrotyrosine. Maturation of the chromophore requires nothing other than molecular oxygen. As to expression, photocytes.

Functionally, energy-transfer acceptor. Its role is to transduce the blue chemiluminescence of the protein aequorin into green fluorescent light by energy transfer. Fluoresces in vivo upon receiving energy from the Ca(2+)-activated photoprotein aequorin. This is Green fluorescent protein (GFP) from Aequorea victoria (Water jellyfish).